Consider the following 199-residue polypeptide: TATA-box-binding protein (199 aa).

Tandem repeats lie at residues 10–86 and 101–177.

This sequence belongs to the TBP family.

Functionally, general factor that plays a role in the activation of archaeal genes transcribed by RNA polymerase. Binds specifically to the TATA box promoter element which lies close to the position of transcription initiation. The protein is TATA-box-binding protein of Pyrobaculum calidifontis (strain DSM 21063 / JCM 11548 / VA1).